Here is a 274-residue protein sequence, read N- to C-terminus: Non-heme haloperoxidase (274 aa).

Residues 22–254 enclose the AB hydrolase-1 domain; sequence PIMFHHGWPL…RLKVYPGLSH (233 aa). Active-site residues include Ser-95, Asp-225, and His-254.

This sequence belongs to the AB hydrolase superfamily. Bacterial non-heme haloperoxidase / perhydrolase family.

The chain is Non-heme haloperoxidase (thcF) from Rhodococcus erythropolis (Arthrobacter picolinophilus).